The primary structure comprises 277 residues: MSLAEQIEQQQDDAGWSAHLQLRFVQRDGVTRLGAWKHFGPLLVQRPFYPEGAPCHVYVLHPPGGIVAGDRLELDIHLEPGSHALLTMPGASKFYRSIGPTARLAQRFHLAAGSTLEWLPQDSIFFSGARASLASRFTLEPGARLLAWETLCLGRPVMHERFDHGALDSLLHIELPDEVGLHERLRLEGGHLGKLGGHPLLATFCAAPANQAVLEQVRPLLDELGNPAGATLLGSLLVIRVLDHDNQHLQRTLQRLWHVLRPAILGLPACPPRIWAT.

The protein belongs to the UreD family. In terms of assembly, ureD, UreF and UreG form a complex that acts as a GTP-hydrolysis-dependent molecular chaperone, activating the urease apoprotein by helping to assemble the nickel containing metallocenter of UreC. The UreE protein probably delivers the nickel.

The protein resides in the cytoplasm. In terms of biological role, required for maturation of urease via the functional incorporation of the urease nickel metallocenter. The sequence is that of Urease accessory protein UreD from Pseudomonas putida (strain ATCC 47054 / DSM 6125 / CFBP 8728 / NCIMB 11950 / KT2440).